The following is a 447-amino-acid chain: Phosphoglucosamine mutase (447 aa).

The active-site Phosphoserine intermediate is serine 104. Mg(2+)-binding residues include serine 104, aspartate 243, aspartate 245, and aspartate 247. At serine 104 the chain carries Phosphoserine.

This sequence belongs to the phosphohexose mutase family. Mg(2+) serves as cofactor. Activated by phosphorylation.

It carries out the reaction alpha-D-glucosamine 1-phosphate = D-glucosamine 6-phosphate. Catalyzes the conversion of glucosamine-6-phosphate to glucosamine-1-phosphate. The polypeptide is Phosphoglucosamine mutase (Corynebacterium efficiens (strain DSM 44549 / YS-314 / AJ 12310 / JCM 11189 / NBRC 100395)).